A 349-amino-acid chain; its full sequence is Flap endonuclease 1 (349 aa).

An N-domain region spans residues 1 to 98; it reads MDLGEIVEDV…EEIERRKRAK (98 aa). Residues D27, D80, E152, E154, D173, D175, and D236 each contribute to the Mg(2+) site. The tract at residues 116–258 is I-domain; that stretch reads EIRKYAQAAV…TALRIIKKYN (143 aa). The interval 341 to 349 is interaction with PCNA; the sequence is KQTGLDQWF.

Belongs to the XPG/RAD2 endonuclease family. FEN1 subfamily. As to quaternary structure, interacts with PCNA. PCNA stimulates the nuclease activity without altering cleavage specificity. Mg(2+) is required as a cofactor.

In terms of biological role, structure-specific nuclease with 5'-flap endonuclease and 5'-3' exonuclease activities involved in DNA replication and repair. During DNA replication, cleaves the 5'-overhanging flap structure that is generated by displacement synthesis when DNA polymerase encounters the 5'-end of a downstream Okazaki fragment. Binds the unpaired 3'-DNA end and kinks the DNA to facilitate 5' cleavage specificity. Cleaves one nucleotide into the double-stranded DNA from the junction in flap DNA, leaving a nick for ligation. Also involved in the base excision repair (BER) pathway. Acts as a genome stabilization factor that prevents flaps from equilibrating into structures that lead to duplications and deletions. Also possesses 5'-3' exonuclease activity on nicked or gapped double-stranded DNA. This chain is Flap endonuclease 1, found in Sulfolobus acidocaldarius (strain ATCC 33909 / DSM 639 / JCM 8929 / NBRC 15157 / NCIMB 11770).